The sequence spans 616 residues: Chaperone protein HscA homolog (616 aa).

It belongs to the heat shock protein 70 family.

Functionally, chaperone involved in the maturation of iron-sulfur cluster-containing proteins. Has a low intrinsic ATPase activity which is markedly stimulated by HscB. This Vibrio atlanticus (strain LGP32) (Vibrio splendidus (strain Mel32)) protein is Chaperone protein HscA homolog.